The following is a 635-amino-acid chain: MHLSEITHPKQLHNLSIHQLEEIARQIREKHLETVATSGGHLGPGLGVVELTLGLYQTLNLDRDKVIWDVGHQAYPHKIITGRYHNFHTLRQKDGIAGYLKRCESKFDHFGAGHASTSISAGLGMALARDMKGDNFKVVSIIGDGALTGGMALEAINHAGHLPKTNILVVLNDNEMSISPNVGAISRYLNKMRLSPPIQFLQDNLEEQFKQIPFVGETFTPEMEGLKGGMKRLAVSKVGAVIEELGFTYMGPVDGHNLEELITTFNQAHQIPGPVLVHVATTKGKGYPVAEEDKVSYHAQNPFNLATGKALPASKPKPPKYSKVFAHTLVKLAENNPKIIGITAAMATGTGLDKLHGKLPKQYIDVGIAEQHAVTLAAGLASEGMRPVVCIYSTFLQRAYDQIIHDVCIQKLPVFFCLDRAGIVGADGPTHQGMYDIAYLRCIPNMVVMAPKDEGELQRMVLTGIKHTDGAIAMRYPRGNGYGVPLMEEGWEAITIGKGEILRNGDDVLILGYGSMVYSAMQTAEILSEHGVAATVVNARFVKPLDTELILPLAQRIGQVVTMEEGCLMGGFGSAVTEALMDNNVLVPVLRLGVPDKLVDHAKPDESKADLGLTPSQMAERILQSFKPRLSTINV.

Residues His72 and 113–115 each bind thiamine diphosphate; that span reads GHA. Mg(2+) is bound at residue Asp144. Thiamine diphosphate is bound by residues 145-146, Asn174, Tyr287, and Glu370; that span reads GA. Position 174 (Asn174) interacts with Mg(2+).

This sequence belongs to the transketolase family. DXPS subfamily. Homodimer. It depends on Mg(2+) as a cofactor. The cofactor is thiamine diphosphate.

It carries out the reaction D-glyceraldehyde 3-phosphate + pyruvate + H(+) = 1-deoxy-D-xylulose 5-phosphate + CO2. It participates in metabolic intermediate biosynthesis; 1-deoxy-D-xylulose 5-phosphate biosynthesis; 1-deoxy-D-xylulose 5-phosphate from D-glyceraldehyde 3-phosphate and pyruvate: step 1/1. Its function is as follows. Catalyzes the acyloin condensation reaction between C atoms 2 and 3 of pyruvate and glyceraldehyde 3-phosphate to yield 1-deoxy-D-xylulose-5-phosphate (DXP). The sequence is that of 1-deoxy-D-xylulose-5-phosphate synthase from Trichodesmium erythraeum (strain IMS101).